The chain runs to 431 residues: MITDRVSDYLEKIEKSDVNAFIDVNSEKVLKEAEELEKNDDLKNKPLYGKIVAVKSNINVKGYKISCASKTLEKYVGTYDATVVKKLRSQGALIVGMTNMDEFAGGSSGETSCYGPTKNPAALDRIPGGSSSGSAAAVAADLCDMAIGSDTGGSIRNPASHCGIVGFKPSYGVVSRQGLCDLAMSFDQIGPLTKNAEDALVLTNAIKGIDRSDSTSLETPKFEKKDISNYKVGVVKEFMDVTDEKIRNEIEKGIEVFKDMGCKIVDLSYKYIDLALPTYYLINYVEFFSATRKYDGRRYGEFIEEACGEEVLRRILIGKHISEQEFSGKYYKKALQARKSMKKEMLGLFNSADLIVGPTVPKLPHKLGEDLSPMEMYAYDVLTVPTNICGICSGVVRCGNISGVPVGLQIQGAPLEDEKVLSAMIEFEKNY.

Active-site charge relay system residues include Lys-55 and Ser-130. Residue Ser-154 is the Acyl-ester intermediate of the active site.

Belongs to the amidase family. GatA subfamily. As to quaternary structure, heterotrimer of A, B and C subunits.

The enzyme catalyses L-glutamyl-tRNA(Gln) + L-glutamine + ATP + H2O = L-glutaminyl-tRNA(Gln) + L-glutamate + ADP + phosphate + H(+). Its function is as follows. Allows the formation of correctly charged Gln-tRNA(Gln) through the transamidation of misacylated Glu-tRNA(Gln) in organisms which lack glutaminyl-tRNA synthetase. The reaction takes place in the presence of glutamine and ATP through an activated gamma-phospho-Glu-tRNA(Gln). The chain is Glutamyl-tRNA(Gln) amidotransferase subunit A from Methanococcus maripaludis (strain C5 / ATCC BAA-1333).